A 1130-amino-acid polypeptide reads, in one-letter code: Alpha-mannosidase 2 (1130 aa).

The Cytoplasmic portion of the chain corresponds to 1-14 (MRTRVLRCRPFSTR). A helical; Signal-anchor for type II membrane protein transmembrane segment spans residues 15–35 (ILLLLLFVLAFGVYCYFYNAS). Residues 36-1130 (PQNYNKPRIS…MEVKTYKIRF (1095 aa)) lie on the Lumenal side of the membrane. N-linked (GlcNAc...) asparagine glycosylation occurs at Asn117. Zn(2+)-binding residues include His133 and Asp135. The N-linked (GlcNAc...) asparagine glycan is linked to Asn166. Asp247 and His527 together coordinate Zn(2+). Asp247 acts as the Nucleophile in catalysis. 4 N-linked (GlcNAc...) asparagine glycosylation sites follow: Asn622, Asn683, Asn1056, and Asn1095.

It belongs to the glycosyl hydrolase 38 family. In terms of assembly, homodimer; disulfide-linked. It depends on Zn(2+) as a cofactor. Post-translationally, N-glycosylated.

It localises to the microsome membrane. Its subcellular location is the golgi apparatus membrane. The catalysed reaction is N(4)-{beta-D-GlcNAc-(1-&gt;2)-alpha-D-Man-(1-&gt;3)-[alpha-D-Man-(1-&gt;3)-[alpha-D-Man-(1-&gt;6)]-alpha-D-Man-(1-&gt;6)]-beta-D-Man-(1-&gt;4)-beta-D-GlcNAc-(1-&gt;4)-beta-D-GlcNAc}-L-asparaginyl-[protein] + 2 H2O = 2 alpha-D-mannopyranose + an N(4)-{beta-D-GlcNAc-(1-&gt;2)-alpha-D-Man-(1-&gt;3)-[alpha-D-Man-(1-&gt;6)]-beta-D-Man-(1-&gt;4)-beta-D-GlcNAc-(1-&gt;4)-beta-D-GlcNAc}-L-asparaginyl-[protein]. The protein operates within protein modification; protein glycosylation. Its activity is regulated as follows. Inhibited by swainsonine. In terms of biological role, catalyzes the first committed step in the biosynthesis of complex N-glycans. It controls conversion of high mannose to complex N-glycans; the final hydrolytic step in the N-glycan maturation pathway. In Spodoptera frugiperda (Fall armyworm), this protein is Alpha-mannosidase 2.